Here is a 142-residue protein sequence, read N- to C-terminus: Small ribosomal subunit protein bS16 (142 aa).

The segment at 88 to 142 (GAEGTLRQPEGKTPFVAPDNGSVIIPEAITPKAEKAEEAPAEDAAPAEDDAEKAE) is disordered. Positions 126–142 (APAEDAAPAEDDAEKAE) are enriched in acidic residues.

This sequence belongs to the bacterial ribosomal protein bS16 family.

The sequence is that of Small ribosomal subunit protein bS16 from Kocuria rhizophila (strain ATCC 9341 / DSM 348 / NBRC 103217 / DC2201).